Here is a 371-residue protein sequence, read N- to C-terminus: Cytochrome b (371 aa).

The next 4 helical transmembrane spans lie at 25 to 45 (FGSMLLTCLMLQVLTGFFLAV), 69 to 90 (WLMQNLHAIGASMFFICIYIHI), 105 to 125 (WMSGITLLITLIATAFFGYVL), and 170 to 190 (FFALHFILPFAIISLSSLHII). Heme b-binding residues include His75 and His89. Residues His174 and His188 each contribute to the heme b site. Residue His193 participates in a ubiquinone binding. 4 helical membrane passes run 218-238 (YKDLLLLTLMLLTLMITVSFF), 280-300 (LGGALALVMSIMILLTAPLTH), 312-332 (LSQLMFWTLISTFITITWAAT), and 339-358 (YIIISQTTATLYFTFFISTP).

Belongs to the cytochrome b family. In terms of assembly, the cytochrome bc1 complex contains 3 respiratory subunits (MT-CYB, CYC1 and UQCRFS1), 2 core proteins (UQCRC1 and UQCRC2) and probably 6 low-molecular weight proteins. Heme b is required as a cofactor.

Its subcellular location is the mitochondrion inner membrane. Component of the ubiquinol-cytochrome c reductase complex (complex III or cytochrome b-c1 complex) that is part of the mitochondrial respiratory chain. The b-c1 complex mediates electron transfer from ubiquinol to cytochrome c. Contributes to the generation of a proton gradient across the mitochondrial membrane that is then used for ATP synthesis. The sequence is that of Cytochrome b (MT-CYB) from Python regius (Ball python).